Consider the following 251-residue polypeptide: MLLKAAPAFALLNTQGENLSPLFSSSKSFSPKNGNRFVVSASKATNHKPLTGVVFEPFEELKKELMLVPAVPDTSLCRQKYSDDCEAAINEQINVEYNNSYVYHAMFAYFDRDNVALKGLAKFFKESSLEEREHAEKLMEFQNKRGGRVKLLSICAPPTEFDHCEKGDALYAMELALCLEKLTNQRLLNLHAVASRSNDVHLADFLESEFLVEQVDAIKKISEYVAQLRRVGQGHGVWQFDQMLLNEGAAA.

The N-terminal 45 residues, 1 to 45, are a transit peptide targeting the chloroplast; sequence MLLKAAPAFALLNTQGENLSPLFSSSKSFSPKNGNRFVVSASKAT. An extension peptide (EP) region spans residues 46–78; it reads NHKPLTGVVFEPFEELKKELMLVPAVPDTSLCR. Residues 79 to 232 form the Ferritin-like diiron domain; sequence QKYSDDCEAA…EYVAQLRRVG (154 aa). Residues E96, E131, H134, E180, and Q214 each coordinate Fe cation.

This sequence belongs to the ferritin family. As to quaternary structure, oligomer of 24 subunits. There are two types of subunits: L (light) chain and H (heavy) chain. The major chain can be light or heavy, depending on the species and tissue type. The functional molecule forms a roughly spherical shell with a diameter of 12 nm and contains a central cavity into which the insoluble mineral iron core is deposited.

It is found in the plastid. The protein resides in the chloroplast. The catalysed reaction is 4 Fe(2+) + O2 + 4 H(+) = 4 Fe(3+) + 2 H2O. In terms of biological role, stores iron in a soluble, non-toxic, readily available form. Important for iron homeostasis. Has ferroxidase activity. Iron is taken up in the ferrous form and deposited as ferric hydroxides after oxidation. This chain is Ferritin-1, chloroplastic (FER1), found in Nicotiana tabacum (Common tobacco).